Reading from the N-terminus, the 150-residue chain is Large ribosomal subunit protein uL13 (150 aa).

This sequence belongs to the universal ribosomal protein uL13 family. In terms of assembly, part of the 50S ribosomal subunit.

Functionally, this protein is one of the early assembly proteins of the 50S ribosomal subunit, although it is not seen to bind rRNA by itself. It is important during the early stages of 50S assembly. The protein is Large ribosomal subunit protein uL13 of Chlamydia abortus (strain DSM 27085 / S26/3) (Chlamydophila abortus).